The primary structure comprises 316 residues: L-lactate dehydrogenase (316 aa).

Residues methionine 14, 14-150 (MIGG…IIGL), isoleucine 15, aspartate 35, tyrosine 67, glycine 81, phenylalanine 82, valine 125, asparagine 127, and leucine 150 contribute to the NAD(+) site. Arginine 95 is a substrate binding site. Residues arginine 158 and histidine 182 each contribute to the substrate site. The Proton acceptor role is filled by histidine 182.

This sequence belongs to the LDH/MDH superfamily. LDH family. In terms of assembly, homotetramer.

It catalyses the reaction (S)-lactate + NAD(+) = pyruvate + NADH + H(+). The protein operates within fermentation; pyruvate fermentation to lactate; (S)-lactate from pyruvate: step 1/1. The protein is L-lactate dehydrogenase of Plasmodium falciparum (isolate CDC / Honduras).